The sequence spans 279 residues: NH(3)-dependent NAD(+) synthetase (279 aa).

46 to 53 lines the ATP pocket; sequence GISGGQDS. Mg(2+) is bound at residue aspartate 52. Residue arginine 145 coordinates deamido-NAD(+). Residue threonine 165 participates in ATP binding. Glutamate 170 contacts Mg(2+). Residues lysine 178 and aspartate 185 each contribute to the deamido-NAD(+) site. Residues lysine 194 and threonine 216 each coordinate ATP. 265-266 provides a ligand contact to deamido-NAD(+); that stretch reads HK.

This sequence belongs to the NAD synthetase family. In terms of assembly, homodimer.

The catalysed reaction is deamido-NAD(+) + NH4(+) + ATP = AMP + diphosphate + NAD(+) + H(+). Its pathway is cofactor biosynthesis; NAD(+) biosynthesis; NAD(+) from deamido-NAD(+) (ammonia route): step 1/1. Catalyzes the ATP-dependent amidation of deamido-NAD to form NAD. Uses ammonia as a nitrogen source. The protein is NH(3)-dependent NAD(+) synthetase of Rhodococcus opacus (strain B4).